Here is a 775-residue protein sequence, read N- to C-terminus: Glutamine--tRNA ligase (775 aa).

The residue at position 2 (Ala-2) is an N-acetylalanine. Ser-70 is subject to Phosphoserine. ATP is bound by residues 271 to 273 (EPN) and 277 to 283 (HIGHAKA). An L-glutamine-binding site is contributed by Asp-303. N6-acetyllysine is present on Lys-309. Position 438 (Tyr-438) interacts with L-glutamine. ATP is bound by residues Thr-457, 486–487 (RL), and 494–496 (VSK). Ser-495 is subject to Phosphoserine.

It belongs to the class-I aminoacyl-tRNA synthetase family. Monomer. Part of a multisubunit complex that groups tRNA ligases for Arg (RARS1), Asp (DARS1), Gln (QARS1), Ile (IARS1), Leu (LARS1), Lys (KARS1), Met (MARS1) the bifunctional ligase for Glu and Pro (EPRS1) and the auxiliary subunits AIMP1/p43, AIMP2/p38 and EEF1E1/p18. Interacts with RARS1. Part of a complex composed of RARS1, QARS1 and AIMP1.

The protein localises to the cytoplasm. The protein resides in the cytosol. It carries out the reaction tRNA(Gln) + L-glutamine + ATP = L-glutaminyl-tRNA(Gln) + AMP + diphosphate. In terms of biological role, glutamine--tRNA ligase. Plays a critical role in brain development. The polypeptide is Glutamine--tRNA ligase (Qars1) (Mus musculus (Mouse)).